We begin with the raw amino-acid sequence, 446 residues long: Regulator of drug sensitivity 2 (446 aa).

The segment at residues 15–45 (KTCLFCKRSHVVCDKQRPCSRCVKRDIAHLC) is a DNA-binding region (zn(2)-C6 fungal-type). Disordered regions lie at residues 52-106 (VPNE…PKLD) and 158-218 (ASNV…KEES). Composition is skewed to polar residues over residues 56 to 70 (MPSQHESSPNDNNIQ) and 84 to 96 (DYQNEPVNKSGST). The residue at position 102 (S102) is a Phosphoserine. Residues 160–177 (NVHLENGSQTTQSPLEYQ) show a composition bias toward polar residues. The segment covering 178 to 192 (NDNRRDEIGVARQEN) has biased composition (basic and acidic residues). Polar residues predominate over residues 193–206 (RSPTIMSGSSNSIS). Positions 207-218 (KGDKQDQEKEES) are enriched in basic and acidic residues. T231 carries the post-translational modification Phosphothreonine.

Phosphorylated by SNF1 in absence of glucose. The phosphorylation is required for induction of transcription of gluconeogenic genes.

Its subcellular location is the cytoplasm. It is found in the nucleus. Functionally, transcription factor which regulates the expression of genes for gluconeogenesis, the TCA cycle, and glucose metabolism. Involved in the cell wall remodeling process and drug resistance. In Saccharomyces cerevisiae (strain ATCC 204508 / S288c) (Baker's yeast), this protein is Regulator of drug sensitivity 2 (RDS2).